Here is a 329-residue protein sequence, read N- to C-terminus: Uroporphyrinogen decarboxylase (329 aa).

Residues 22-26, D71, Y140, S195, and H307 contribute to the substrate site; that span reads RQVGR.

It belongs to the uroporphyrinogen decarboxylase family. Homodimer.

The protein localises to the cytoplasm. The enzyme catalyses uroporphyrinogen III + 4 H(+) = coproporphyrinogen III + 4 CO2. The protein operates within porphyrin-containing compound metabolism; protoporphyrin-IX biosynthesis; coproporphyrinogen-III from 5-aminolevulinate: step 4/4. Functionally, catalyzes the decarboxylation of four acetate groups of uroporphyrinogen-III to yield coproporphyrinogen-III. This Chlamydia pneumoniae (Chlamydophila pneumoniae) protein is Uroporphyrinogen decarboxylase.